The following is a 205-amino-acid chain: Peptidyl-tRNA hydrolase (205 aa).

Residue Tyr14 coordinates tRNA. His19 (proton acceptor) is an active-site residue. Residues Tyr64, Asn66, and Asn112 each coordinate tRNA.

The protein belongs to the PTH family. Monomer.

The protein resides in the cytoplasm. The enzyme catalyses an N-acyl-L-alpha-aminoacyl-tRNA + H2O = an N-acyl-L-amino acid + a tRNA + H(+). In terms of biological role, hydrolyzes ribosome-free peptidyl-tRNAs (with 1 or more amino acids incorporated), which drop off the ribosome during protein synthesis, or as a result of ribosome stalling. Catalyzes the release of premature peptidyl moieties from peptidyl-tRNA molecules trapped in stalled 50S ribosomal subunits, and thus maintains levels of free tRNAs and 50S ribosomes. This Parvibaculum lavamentivorans (strain DS-1 / DSM 13023 / NCIMB 13966) protein is Peptidyl-tRNA hydrolase.